Here is a 318-residue protein sequence, read N- to C-terminus: Ankyrin repeat and SOCS box protein 7 (318 aa).

ANK repeat units lie at residues 13-42 (QEES…SPNG), 46-75 (NGWT…DPTV), 80-109 (GGFT…RSDI), 116-145 (DGWT…EVDP), 149-178 (KGTT…NIDI), 180-208 (NGFL…DTNL), and 213-242 (DGQT…DTNT). In terms of domain architecture, SOCS box spans 265-318 (LDFLQEVTRQPRNLQDLCRIKIRQCIGLQNLKLLDELPIAKVMKDYLKHKSDDI).

Belongs to the ankyrin SOCS box (ASB) family. As to quaternary structure, interacts with CUL5. Interacts with RNF7. Interacts with PSRC1.

Its pathway is protein modification; protein ubiquitination. Functionally, probable substrate-recognition component of a SCF-like ECS (Elongin-Cullin-SOCS-box protein) E3 ubiquitin-protein ligase complex which mediates the ubiquitination and subsequent proteasomal degradation of target proteins. Plays a role in spindle dynamics and genome integrity by targeting the mitotic progression protein PSRC1 for proteasomal degradation in a cell cycle-dependent manner. Also participates in meiosis by mediating the proper attachment between kinetochores and microtubules. The protein is Ankyrin repeat and SOCS box protein 7 (ASB7) of Pongo abelii (Sumatran orangutan).